We begin with the raw amino-acid sequence, 563 residues long: Zinc finger protein 503 (563 aa).

The span at 1–10 shows a compositional bias: polar residues; it reads MITSPSASRN. Disordered stretches follow at residues 1-48 and 101-226; these read MITS…PLRQ and SQIG…TSVS. Composition is skewed to low complexity over residues 19–33 and 112–122; these read SSSS…AVAS and SKLSSVTSNGS. The segment covering 174–194 has biased composition (polar residues); the sequence is ATCQPFTPRTGSPNSSTSASP. Residues 199–211 are compositionally biased toward basic and acidic residues; it reads GKGERDEKKDSDC. Over residues 212-226 the composition is skewed to polar residues; the sequence is NKNCSSDGSAPTSVS. A C2H2-type zinc finger spans residues 431–459; that stretch reads HVCNWVSANGPCDKRFSSSEELLNHLRTH.

It belongs to the Elbow/Noc family. Interacts with nlz1.

The protein resides in the nucleus. Its function is as follows. Required for segmental gene expression during hindbrain development. May function as a transcriptional repressor. This Danio rerio (Zebrafish) protein is Zinc finger protein 503 (znf503).